Consider the following 526-residue polypeptide: AAA ATPase forming ring-shaped complexes (526 aa).

The span at 1 to 18 (MGDMASSTDPAAHNSFSD) shows a compositional bias: polar residues. The tract at residues 1-20 (MGDMASSTDPAAHNSFSDFN) is disordered. Positions 20–59 (NREEMTRLADNVRSLQRTNQDLSARNTKLAEMLKSSRDKL) form a coiled coil. Position 257–262 (257–262 (GCGKTL)) interacts with ATP.

This sequence belongs to the AAA ATPase family. As to quaternary structure, homohexamer. Assembles into a hexameric ring structure.

This is AAA ATPase forming ring-shaped complexes from Corynebacterium efficiens (strain DSM 44549 / YS-314 / AJ 12310 / JCM 11189 / NBRC 100395).